Here is a 193-residue protein sequence, read N- to C-terminus: Xanthine phosphoribosyltransferase (193 aa).

Xanthine contacts are provided by L20 and N27. A 5-phospho-alpha-D-ribose 1-diphosphate-binding site is contributed by 129–133 (ANGKA). K157 contacts xanthine.

Belongs to the purine/pyrimidine phosphoribosyltransferase family. Xpt subfamily. In terms of assembly, homodimer.

It localises to the cytoplasm. It carries out the reaction XMP + diphosphate = xanthine + 5-phospho-alpha-D-ribose 1-diphosphate. It participates in purine metabolism; XMP biosynthesis via salvage pathway; XMP from xanthine: step 1/1. Its function is as follows. Converts the preformed base xanthine, a product of nucleic acid breakdown, to xanthosine 5'-monophosphate (XMP), so it can be reused for RNA or DNA synthesis. The sequence is that of Xanthine phosphoribosyltransferase from Bifidobacterium longum subsp. infantis (strain ATCC 15697 / DSM 20088 / JCM 1222 / NCTC 11817 / S12).